The primary structure comprises 405 residues: ATP phosphoribosyltransferase regulatory subunit (405 aa).

The protein belongs to the class-II aminoacyl-tRNA synthetase family. HisZ subfamily. Heteromultimer composed of HisG and HisZ subunits.

The protein resides in the cytoplasm. It functions in the pathway amino-acid biosynthesis; L-histidine biosynthesis; L-histidine from 5-phospho-alpha-D-ribose 1-diphosphate: step 1/9. Functionally, required for the first step of histidine biosynthesis. May allow the feedback regulation of ATP phosphoribosyltransferase activity by histidine. This is ATP phosphoribosyltransferase regulatory subunit from Oceanobacillus iheyensis (strain DSM 14371 / CIP 107618 / JCM 11309 / KCTC 3954 / HTE831).